The chain runs to 1067 residues: Hemoglobin and hemoglobin-haptoglobin-binding protein B (1067 aa).

Positions 1–24 are cleaved as a signal peptide; the sequence is MTNFKFSLLACSIAFALNASTAYA. A run of 6 repeats spans residues 26–29, 30–33, 34–37, 38–41, 42–45, and 46–49. The interval 26–49 is 6 X 4 AA tandem repeats of Q-P-T-N; sequence QPTNQPTNQPTNQPTNQPTNQPTN. Residues 26 to 51 show a composition bias toward low complexity; it reads QPTNQPTNQPTNQPTNQPTNQPTNQN. Residues 26 to 53 form a disordered region; sequence QPTNQPTNQPTNQPTNQPTNQPTNQNSN. The TonB box signature appears at 59–66; the sequence is EQINVSGS. The 126-residue stretch at 71-196 folds into the TBDR plug domain; sequence NIKEKKVGET…LGGSVIFETK (126 aa). The region spanning 204–1067 is the TBDR beta-barrel domain; that stretch reads DKDYYLSYKR…NYRMSVQFEF (864 aa). The TonB C-terminal box motif lies at 1050 to 1067; that stretch reads NRFYAPGRNYRMSVQFEF.

It belongs to the TonB-dependent receptor family. Hemoglobin/haptoglobin binding protein subfamily.

It localises to the cell outer membrane. In terms of biological role, acts as a receptor for hemoglobin or the hemoglobin/haptoglobin complex of the human host and is required for heme uptake. The protein is Hemoglobin and hemoglobin-haptoglobin-binding protein B (hgbB) of Haemophilus influenzae.